Reading from the N-terminus, the 442-residue chain is Chitinase-like protein Idgf4 (442 aa).

A signal peptide spans 1–21 (MKLYALFSLLVGSLAIGQISA). A GH18 domain is found at 25–442 (HHLLCYYDGN…PILRQVKSKL (418 aa)). The cysteines at positions 29 and 56 are disulfide-linked. Asparagine 224 carries an N-linked (GlcNAc...) asparagine glycan. A disulfide bridge links cysteine 343 with cysteine 426.

The protein belongs to the glycosyl hydrolase 18 family. IDGF subfamily. In terms of processing, glycosylated. As to expression, primarily expressed in yolk cells and fat body. In larvae, it is expressed in the imaginal ring, the salivary duct, large salivary gland cells and weakly expressed in imaginal disks. More strongly expressed than Idgf1 and Idgf3.

It is found in the secreted. Functionally, cooperates with insulin-like peptides to stimulate the proliferation, polarization and motility of imaginal disk cells. May act by stabilizing the binding of insulin-like peptides to its receptor through a simultaneous interaction with both molecules to form a multiprotein signaling complex. This chain is Chitinase-like protein Idgf4 (Idgf4), found in Drosophila melanogaster (Fruit fly).